Here is a 148-residue protein sequence, read N- to C-terminus: Probable 4-amino-4-deoxy-L-arabinose-phosphoundecaprenol flippase subunit ArnF (148 aa).

The Cytoplasmic portion of the chain corresponds to 1–23; the sequence is MRGDNTGVGKEPAVTERPAIKGY. The helical transmembrane segment at 24–44 threads the bilayer; that stretch reads LYVLGSILLVTLAQLAMKWGV. Over 45 to 63 the chain is Periplasmic; that stretch reads MQLPAWQASLDIMLAHPVP. Residues 64-84 form a helical membrane-spanning segment; that stretch reads LLVITAGVGCYALSLLCWLAA. At 85–91 the chain is on the cytoplasmic side; sequence LHFTPLN. The helical transmembrane segment at 92–112 threads the bilayer; sequence IAYPLLSTSYALVYLLAVSIP. Residues 113–117 are Periplasmic-facing; that stretch reads SFAEP. A helical transmembrane segment spans residues 118–138; it reads LEPGKAVGVIFILLGAVLVGI. Over 139-148 the chain is Cytoplasmic; that stretch reads KPVGRKRNAH.

It belongs to the ArnF family. In terms of assembly, heterodimer of ArnE and ArnF.

It is found in the cell inner membrane. The protein operates within bacterial outer membrane biogenesis; lipopolysaccharide biosynthesis. Its function is as follows. Translocates 4-amino-4-deoxy-L-arabinose-phosphoundecaprenol (alpha-L-Ara4N-phosphoundecaprenol) from the cytoplasmic to the periplasmic side of the inner membrane. This is Probable 4-amino-4-deoxy-L-arabinose-phosphoundecaprenol flippase subunit ArnF from Aeromonas salmonicida (strain A449).